Reading from the N-terminus, the 88-residue chain is Small ribosomal subunit protein bS16c (88 aa).

Belongs to the bacterial ribosomal protein bS16 family.

The protein resides in the plastid. It localises to the chloroplast. This chain is Small ribosomal subunit protein bS16c, found in Jasminum nudiflorum (Winter jasmine).